A 542-amino-acid chain; its full sequence is Carboxypeptidase Y homolog A (542 aa).

Positions 1–17 (MRVLPATLLVGAASAAV) are cleaved as a signal peptide. A propeptide spanning residues 18-123 (PPLQQVLGRP…KLEAYDLRIK (106 aa)) is cleaved from the precursor. Cystine bridges form between Cys-178–Cys-418, Cys-312–Cys-326, Cys-336–Cys-359, Cys-343–Cys-352, and Cys-381–Cys-388. N-linked (GlcNAc...) asparagine glycosylation occurs at Asn-209. Residue Ser-265 is part of the active site. Asp-457 is a catalytic residue. A glycan (N-linked (GlcNAc...) asparagine) is linked at Asn-508. His-519 is a catalytic residue.

Belongs to the peptidase S10 family.

It is found in the vacuole. It carries out the reaction Release of a C-terminal amino acid with broad specificity.. Functionally, vacuolar carboxypeptidase involved in degradation of small peptides. Digests preferentially peptides containing an aliphatic or hydrophobic residue in P1' position, as well as methionine, leucine or phenylalanine in P1 position of ester substrate. This Aspergillus oryzae (strain ATCC 42149 / RIB 40) (Yellow koji mold) protein is Carboxypeptidase Y homolog A (cpyA).